The sequence spans 269 residues: MSQQNGNVNRVGAQDRVGASGGMEHSFGFKAVDENEKQGLVNDVFHKVAKRYDIMNDLMSAGMHRVWKDAMVAWLAPSKRPGWTSLDVAGGTGDIAFRIVEASGRQAHVTILDINGSMLGVGRERAIKKGLIDNLEFVEANAEELPFEDNSFDAYTIAFGIRNVPHIDKALSEAYRVLKPGGRFLCLEFSEVELPVLDKVYDEWSFRAIPRIGKMITGDADSYSYLVESIRKFPKQQDFAAMIEKAGFERVSYRNFTGGIAALHSGWKL.

S-adenosyl-L-methionine-binding positions include Thr92, Asp113, and 141–142 (NA).

This sequence belongs to the class I-like SAM-binding methyltransferase superfamily. MenG/UbiE family.

It catalyses the reaction a 2-demethylmenaquinol + S-adenosyl-L-methionine = a menaquinol + S-adenosyl-L-homocysteine + H(+). It carries out the reaction a 2-methoxy-6-(all-trans-polyprenyl)benzene-1,4-diol + S-adenosyl-L-methionine = a 5-methoxy-2-methyl-3-(all-trans-polyprenyl)benzene-1,4-diol + S-adenosyl-L-homocysteine + H(+). It participates in quinol/quinone metabolism; menaquinone biosynthesis; menaquinol from 1,4-dihydroxy-2-naphthoate: step 2/2. It functions in the pathway cofactor biosynthesis; ubiquinone biosynthesis. Its function is as follows. Methyltransferase required for the conversion of demethylmenaquinol (DMKH2) to menaquinol (MKH2) and the conversion of 2-polyprenyl-6-methoxy-1,4-benzoquinol (DDMQH2) to 2-polyprenyl-3-methyl-6-methoxy-1,4-benzoquinol (DMQH2). This is Ubiquinone/menaquinone biosynthesis C-methyltransferase UbiE from Brucella melitensis biotype 2 (strain ATCC 23457).